The sequence spans 371 residues: MDARRVPQKDLRVKKNLKKFRYVKLISMETSSSSDDSCDSFASDNFANTRLQSVREGCRTRSQCRHSGPLRVAMKFPARSTRGATNKKAESRQPSENSVTDSNSDSEDESGMNFLEKRALNIKQNKAMLAKLMSELESFPGSFRGRHPLPGSDSQSRRPRRRTFPGVASRRNPERRARPLTRSRSRILGSLDALPMEEEEEEDKYMLVRKRKTVDGYMNEDDLPRSRRSRSSVTLPHIIRPVEEITEEELENVCSNSREKIYNRSLGSTCHQCRQKTIDTKTNCRNPDCWGVRGQFCGPCLRNRYGEEVRDALLDPNWHCPPCRGICNCSFCRQRDGRCATGVLVYLAKYHGFGNVHAYLKSLKQEFEMQA.

Disordered stretches follow at residues 60–110 and 140–188; these read TRSQ…EDES and PGSF…SRIL. A compositionally biased stretch (polar residues) spans 94-103; it reads PSENSVTDSN. At S142 the chain carries Phosphoserine. Positions 146 to 170 are interaction with MYC; it reads RHPLPGSDSQSRRPRRRTFPGVASR. The Nuclear localization signal motif lies at 160-176; that stretch reads RRRTFPGVASRRNPERR. T163 carries the post-translational modification Phosphothreonine. At S190 the chain carries Phosphoserine. Residue K204 forms a Glycyl lysine isopeptide (Lys-Gly) (interchain with G-Cter in SUMO2) linkage. The tract at residues 247–371 is mediates transcriptional activity; that stretch reads EEELENVCSN…SLKQEFEMQA (125 aa).

As to quaternary structure, interacts with MYC (via C-terminus), YWHAE and YWHAZ. Phosphorylation at Thr-163 promotes interaction with YWHAE and YWHAZ, dissociation from MYC and sequestration in the cytoplasm. In vitro, phosphorylated at Thr-163 by AKT. In terms of tissue distribution, ubiquitous with higher level in thymus and small intestine. Overexpressed in a large number of tumors, in blood from patients with acute myelogenous leukemia (AML) and in chronic myelogenous leukemia (CML) blast crisis.

Its subcellular location is the nucleus. The protein resides in the cytoplasm. Participates in MYC-mediated cell transformation and apoptosis; induces anchorage-independent growth and clonogenicity in lymphoblastoid cells. Insufficient to induce tumorigenicity when overexpressed but contributes to MYC-mediated tumorigenesis. May play a role as transcriptional regulator. The protein is Cell division cycle-associated protein 7 (CDCA7) of Homo sapiens (Human).